The primary structure comprises 462 residues: MLDINQFIEDKGGNPELIRQSQKARNASVEIVDEIISDYKDWVKTRFELDELNKKFNKLQKDIGLKFKNKEDASGLLAEKEKLTQQKKELTEKEQQEDKDLKKKVFQVGNIVHPSVVVSNDEENNELVRTWKPEDLEAVGPIASVTGKPASLSHHEILLRLDGYDPDRGVKICGHRGYFFRNYGVFLNQALINYGLQFLAAKGYIPLQAPVMMNKELMSKTAQLSEFDEELYKVIDGEDEKYLIATSEQPISAYHSGEWFEKPQEQLPIHYVGYSSCFRREAGSHGKDAWGVFRVHAFEKIEQFVITEPEKSWEEFEKMISYSEEFYKSLKLPYRIVGIVSGELNNAAAKKYDLEAWFPYQKEYKELVSCSNCTDYQSRNLEIRCGIKKMGDREKKYVHCLNSTLAATQRALCCILENYQTEDGLVVPEVLRKYIPGEPEFLPFVNELPKNSTSSKDKKKKN.

Lys241 participates in a covalent cross-link: Glycyl lysine isopeptide (Lys-Gly) (interchain with G-Cter in URM1). 246 to 248 contacts L-serine; sequence TSE. Residues 279–281 and Val295 contribute to the ATP site; that span reads RRE. Glu302 lines the L-serine pocket. Residues Lys350 and Lys351 each participate in a glycyl lysine isopeptide (Lys-Gly) (interchain with G-Cter in URM1) cross-link. ATP is bound at residue 366–369; that stretch reads ELVS. Residues Cys373 and Cys400 each carry the cysteine persulfide modification. Position 404 (Thr404) interacts with L-serine.

Belongs to the class-II aminoacyl-tRNA synthetase family. Type-1 seryl-tRNA synthetase subfamily. In terms of assembly, homodimer; the tRNA molecule probably binds across the dimer. Interacts with ABP140; interaction is required for the tRNA N(3)-methylcytidine methyltransferase activity of ABP140. Conjugated to URM1, a ubiquitin-like protein, in response to oxidative stresses. The attachment of URM1 to lysine residues exclusively depends on the presence of a peroxidatic cysteine in the target protein, with low specificity for the particular residue, motif, or structural context at which urmylation can occur. The URM1-conjugation reaction is mechanistically and directly coupled to the process of cysteine persulfidation, transfering the sulfur atom of the URM1 thiocarboxyl group to redox-active cysteine residues in the target protein if it is exposed to oxidative conditions. In terms of processing, persulfidated on specific redox-active cysteine residues. Persulfidation (also called protein S-sulfhydration) may provide a molecular mechanism that enables cells to protect vulnerable cysteine residues from reactive oxygen species (ROS) under stress conditions.

It is found in the cytoplasm. Its subcellular location is the cytosol. The enzyme catalyses tRNA(Ser) + L-serine + ATP = L-seryl-tRNA(Ser) + AMP + diphosphate + H(+). Catalyzes the attachment of serine to tRNA(Ser) in a two-step reaction: serine is first activated by ATP to form Ser-AMP and then transferred to the acceptor end of tRNA(Ser). This Saccharomyces cerevisiae (strain ATCC 204508 / S288c) (Baker's yeast) protein is Serine--tRNA ligase, cytoplasmic (SES1).